The sequence spans 241 residues: MLVLFVATWSDLGLCKKRPKPGGWNTGGSRYPGQGSPGGNRYPPQGGGSWGQPHGGGWGQPHGGGWGQPHGGGWGQPHGGGWGQGGGTHNQWNKPSKPKTNMKHVAGAAAAGAVVGGLGGYMLGSAMSRPLIHFGNDYEDRYYRENMYRYPNQVYYRPVDQYSNQNNFVHDCVNITIKQHTVTTTTKGENFTETDVKMMERVVEQMCITQYEKESQAYYQRGSSMVLFSSPPVILLISFLI.

Residues 1 to 15 (MLVLFVATWSDLGLC) form the signal peptide. Positions 16–31 (KKRPKPGGWNTGGSRY) are interaction with ADGRG6. The interval 16 to 223 (KKRPKPGGWN…ESQAYYQRGS (208 aa)) is interaction with GRB2, ERI3 and SYN1. The disordered stretch occupies residues 18–100 (RPKPGGWNTG…QWNKPSKPKT (83 aa)). 5 consecutive repeat copies span residues 44–52 (PQGGGSWGQ), 53–60 (PHGGGWGQ), 61–68 (PHGGGWGQ), 69–76 (PHGGGWGQ), and 77–84 (PHGGGWGQ). A 5 X 8 AA tandem repeats of P-H-G-G-G-W-G-Q region spans residues 44–84 (PQGGGSWGQPHGGGWGQPHGGGWGQPHGGGWGQPHGGGWGQ). Positions 45 to 88 (QGGGSWGQPHGGGWGQPHGGGWGQPHGGGWGQPHGGGWGQGGGT) are enriched in gly residues. Cu(2+) contacts are provided by H54, G55, G56, H62, G63, G64, H70, G71, G72, H78, G79, and G80. C172 and C207 are disulfide-bonded. N-linked (GlcNAc...) asparagine glycosylation is found at N174 and N190. A lipid anchor (GPI-anchor amidated serine) is attached at S223. A propeptide spans 224–241 (SMVLFSSPPVILLISFLI) (removed in mature form).

Belongs to the prion family. Monomer and homodimer. Has a tendency to aggregate into amyloid fibrils containing a cross-beta spine, formed by a steric zipper of superposed beta-strands. Soluble oligomers may represent an intermediate stage on the path to fibril formation. Copper binding may promote oligomerization. Interacts with GRB2, APP, ERI3/PRNPIP and SYN1. Mislocalized cytosolically exposed PrP interacts with MGRN1; this interaction alters MGRN1 subcellular location and causes lysosomal enlargement. Interacts with APP. Interacts with KIAA1191. Interacts with ADGRG6.

It localises to the cell membrane. Its subcellular location is the golgi apparatus. Its function is as follows. Its primary physiological function is unclear. May play a role in neuronal development and synaptic plasticity. May be required for neuronal myelin sheath maintenance. May promote myelin homeostasis through acting as an agonist for ADGRG6 receptor. May play a role in iron uptake and iron homeostasis. Soluble oligomers are toxic to cultured neuroblastoma cells and induce apoptosis (in vitro). Association with GPC1 (via its heparan sulfate chains) targets PRNP to lipid rafts. Also provides Cu(2+) or Zn(2+) for the ascorbate-mediated GPC1 deaminase degradation of its heparan sulfate side chains. This chain is Major prion protein (PRNP), found in Plecturocebus moloch (Dusky titi monkey).